The following is a 287-amino-acid chain: Oxaloacetate decarboxylase (287 aa).

A substrate-binding site is contributed by serine 50. Aspartate 88 contributes to the Mg(2+) binding site. Substrate contacts are provided by arginine 159 and histidine 235.

It belongs to the isocitrate lyase family. Oxaloacetate decarboxylase subfamily. As to quaternary structure, homotetramer; dimer of dimers. Mg(2+) serves as cofactor.

The enzyme catalyses oxaloacetate + H(+) = pyruvate + CO2. Its function is as follows. Catalyzes the decarboxylation of oxaloacetate into pyruvate. Seems to play a role in maintaining cellular concentrations of bicarbonate and pyruvate. This is Oxaloacetate decarboxylase from Pseudomonas aeruginosa (strain LESB58).